The following is a 347-amino-acid chain: tRNA N6-adenosine threonylcarbamoyltransferase (347 aa).

Fe cation is bound by residues His-111 and His-115. Substrate-binding positions include 133 to 137 (LASGG), Asp-166, Gly-179, and Asn-278. Position 306 (Asp-306) interacts with Fe cation.

It belongs to the KAE1 / TsaD family. Fe(2+) is required as a cofactor.

It is found in the cytoplasm. The enzyme catalyses L-threonylcarbamoyladenylate + adenosine(37) in tRNA = N(6)-L-threonylcarbamoyladenosine(37) in tRNA + AMP + H(+). Required for the formation of a threonylcarbamoyl group on adenosine at position 37 (t(6)A37) in tRNAs that read codons beginning with adenine. Is involved in the transfer of the threonylcarbamoyl moiety of threonylcarbamoyl-AMP (TC-AMP) to the N6 group of A37, together with TsaE and TsaB. TsaD likely plays a direct catalytic role in this reaction. This is tRNA N6-adenosine threonylcarbamoyltransferase from Paramagnetospirillum magneticum (strain ATCC 700264 / AMB-1) (Magnetospirillum magneticum).